The chain runs to 147 residues: Endoribonuclease YbeY (147 aa).

His-109, His-113, and His-119 together coordinate Zn(2+).

The protein belongs to the endoribonuclease YbeY family. Requires Zn(2+) as cofactor.

It localises to the cytoplasm. Its function is as follows. Single strand-specific metallo-endoribonuclease involved in late-stage 70S ribosome quality control and in maturation of the 3' terminus of the 16S rRNA. This chain is Endoribonuclease YbeY, found in Thiobacillus denitrificans (strain ATCC 25259 / T1).